The chain runs to 407 residues: Argininosuccinate synthase (407 aa).

Residues 10-18 and alanine 37 each bind ATP; that span reads AYSGGLDTS. Tyrosine 90 and serine 95 together coordinate L-citrulline. An ATP-binding site is contributed by glycine 120. The L-aspartate site is built by threonine 122, asparagine 126, and aspartate 127. L-citrulline is bound at residue asparagine 126. Arginine 130, serine 181, serine 190, glutamate 266, and tyrosine 278 together coordinate L-citrulline.

Belongs to the argininosuccinate synthase family. Type 1 subfamily. In terms of assembly, homotetramer.

It localises to the cytoplasm. The enzyme catalyses L-citrulline + L-aspartate + ATP = 2-(N(omega)-L-arginino)succinate + AMP + diphosphate + H(+). It functions in the pathway amino-acid biosynthesis; L-arginine biosynthesis; L-arginine from L-ornithine and carbamoyl phosphate: step 2/3. The sequence is that of Argininosuccinate synthase from Ruegeria sp. (strain TM1040) (Silicibacter sp.).